The following is a 297-amino-acid chain: N-acetylneuraminate lyase (297 aa).

Residues serine 47 and threonine 48 each coordinate aceneuramate. The active-site Proton donor is the tyrosine 137. The active-site Schiff-base intermediate with substrate is lysine 165. Aceneuramate contacts are provided by threonine 167, glycine 189, aspartate 191, glutamate 192, and serine 208.

This sequence belongs to the DapA family. NanA subfamily. In terms of assembly, homotetramer.

It localises to the cytoplasm. It catalyses the reaction aceneuramate = aldehydo-N-acetyl-D-mannosamine + pyruvate. It functions in the pathway amino-sugar metabolism; N-acetylneuraminate degradation; D-fructose 6-phosphate from N-acetylneuraminate: step 1/5. Functionally, catalyzes the reversible aldol cleavage of N-acetylneuraminic acid (sialic acid; Neu5Ac) to form pyruvate and N-acetylmannosamine (ManNAc) via a Schiff base intermediate. In Salmonella agona (strain SL483), this protein is N-acetylneuraminate lyase.